The following is a 306-amino-acid chain: Aspartate carbamoyltransferase catalytic subunit (306 aa).

Carbamoyl phosphate contacts are provided by arginine 55 and threonine 56. Lysine 84 is an L-aspartate binding site. Arginine 105, histidine 133, and glutamine 136 together coordinate carbamoyl phosphate. L-aspartate is bound by residues arginine 166 and arginine 227. Carbamoyl phosphate is bound by residues leucine 265 and proline 266.

This sequence belongs to the aspartate/ornithine carbamoyltransferase superfamily. ATCase family. Heterododecamer (2C3:3R2) of six catalytic PyrB chains organized as two trimers (C3), and six regulatory PyrI chains organized as three dimers (R2).

It carries out the reaction carbamoyl phosphate + L-aspartate = N-carbamoyl-L-aspartate + phosphate + H(+). It participates in pyrimidine metabolism; UMP biosynthesis via de novo pathway; (S)-dihydroorotate from bicarbonate: step 2/3. Catalyzes the condensation of carbamoyl phosphate and aspartate to form carbamoyl aspartate and inorganic phosphate, the committed step in the de novo pyrimidine nucleotide biosynthesis pathway. The protein is Aspartate carbamoyltransferase catalytic subunit of Neisseria meningitidis serogroup A / serotype 4A (strain DSM 15465 / Z2491).